We begin with the raw amino-acid sequence, 473 residues long: Photosystem II CP43 reaction center protein (473 aa).

Residues 1-14 (MKTLYSLRRFYPVE) constitute a propeptide that is removed on maturation. An N-acetylthreonine modification is found at threonine 15. Threonine 15 is subject to Phosphothreonine. The next 5 helical transmembrane spans lie at 69–93 (LFEVAHFVPEKPMYEQGLILLPHLA), 134–155 (LLGPETLEESFPFFGYVWKDRN), 178–200 (KALYFGGVYDTWAPGGGDVRKIT), 255–275 (KPFAWARRAFVWSGEAYLSYS), and 291–312 (WFNNTAYPSEFYGPTGPEASQA). Glutamate 367 provides a ligand contact to [CaMn4O5] cluster. Residues 447-471 (RARAAAAGFEKGIDRDLEPVLSMTP) form a helical membrane-spanning segment.

The protein belongs to the PsbB/PsbC family. PsbC subfamily. PSII is composed of 1 copy each of membrane proteins PsbA, PsbB, PsbC, PsbD, PsbE, PsbF, PsbH, PsbI, PsbJ, PsbK, PsbL, PsbM, PsbT, PsbX, PsbY, PsbZ, Psb30/Ycf12, at least 3 peripheral proteins of the oxygen-evolving complex and a large number of cofactors. It forms dimeric complexes. Requires Binds multiple chlorophylls and provides some of the ligands for the Ca-4Mn-5O cluster of the oxygen-evolving complex. It may also provide a ligand for a Cl- that is required for oxygen evolution. PSII binds additional chlorophylls, carotenoids and specific lipids. as cofactor.

Its subcellular location is the plastid. It localises to the chloroplast thylakoid membrane. Functionally, one of the components of the core complex of photosystem II (PSII). It binds chlorophyll and helps catalyze the primary light-induced photochemical processes of PSII. PSII is a light-driven water:plastoquinone oxidoreductase, using light energy to abstract electrons from H(2)O, generating O(2) and a proton gradient subsequently used for ATP formation. The protein is Photosystem II CP43 reaction center protein of Acorus calamus var. americanus (American sweet flag).